We begin with the raw amino-acid sequence, 436 residues long: 3-ketoacyl-CoA thiolase (436 aa).

The active-site Acyl-thioester intermediate is the cysteine 99. Catalysis depends on proton acceptor residues histidine 392 and cysteine 422.

This sequence belongs to the thiolase-like superfamily. Thiolase family. Heterotetramer of two alpha chains (FadJ) and two beta chains (FadI).

It localises to the cytoplasm. It carries out the reaction an acyl-CoA + acetyl-CoA = a 3-oxoacyl-CoA + CoA. The protein operates within lipid metabolism; fatty acid beta-oxidation. In terms of biological role, catalyzes the final step of fatty acid oxidation in which acetyl-CoA is released and the CoA ester of a fatty acid two carbons shorter is formed. In Shewanella baltica (strain OS185), this protein is 3-ketoacyl-CoA thiolase.